The following is a 118-amino-acid chain: MTSYTFSRELRLLTPAQFKSVFSNPIKASSAEITLLAIPNSEQHPRLGLTVAKRFVKRANQRNRIKRVIRDSFRLHQHDIPDIDIVVLVRNGVMEMENAELHKLIEKLWRKLSRRYNG.

It belongs to the RnpA family. As to quaternary structure, consists of a catalytic RNA component (M1 or rnpB) and a protein subunit.

The catalysed reaction is Endonucleolytic cleavage of RNA, removing 5'-extranucleotides from tRNA precursor.. In terms of biological role, RNaseP catalyzes the removal of the 5'-leader sequence from pre-tRNA to produce the mature 5'-terminus. It can also cleave other RNA substrates such as 4.5S RNA. The protein component plays an auxiliary but essential role in vivo by binding to the 5'-leader sequence and broadening the substrate specificity of the ribozyme. The chain is Ribonuclease P protein component from Shewanella frigidimarina (strain NCIMB 400).